The sequence spans 292 residues: MAASTEQATGGVEKTAAEEKPRVLEPGAAPFGNFPHYSRFHPPEQRLRLLPPELLRRLFPQSPETRPILGLDVGCNSGDLSVALYKHFLSLHDGETCLDASRELHLLCCDIDPVLVERAEKECPFPDGLTFITLDFMNQRTRKVLLSSFLSQFGRSVFDIGFCMSVTMWIHLNHGDQGLWEFLAHLSSLCRYLLVEPQPWKCYRAAARRLRKLGLHDFDHFRSLAIRGDMASQIVQILTQDHGMELVCCFGNTKWDRSLLLFRTKQATETHPIPESLIEEGKERNRIRFWRE.

Residues 1–22 (MAASTEQATGGVEKTAAEEKPR) are disordered. S-adenosyl-L-methionine contacts are provided by residues Arg46, Asn76, Asp110, 135–136 (DF), and Met164. The Bin3-type SAM domain maps to 53–274 (ELLRRLFPQS…KQATETHPIP (222 aa)).

The protein belongs to the methyltransferase superfamily. Interacts with DICER1; the interaction may be mediated by RNA.

The protein localises to the cytoplasm. It catalyses the reaction a 5'-end 5'-phospho-ribonucleoside-RNA + S-adenosyl-L-methionine = a 5'-end (5'-methylphospho)-ribonucleoside-RNA + S-adenosyl-L-homocysteine. The catalysed reaction is a 5'-end 5'-phospho-ribonucleoside-RNA + 2 S-adenosyl-L-methionine = a 5'-end (5'-bismethylphospho)-ribonucleoside-RNA + 2 S-adenosyl-L-homocysteine. O-methyltransferase that specifically monomethylates 5'-monophosphate of cytoplasmic histidyl tRNA (tRNA(His)), acting as a capping enzyme by protecting tRNA(His) from cleavage by DICER1. Also able, with less efficiently, to methylate the 5' monophosphate of a subset of pre-miRNAs, acting as a negative regulator of miRNA processing. The 5' monophosphate of pre-miRNAs is recognized by DICER1 and is required for pre-miRNAs processing: methylation at this position reduces the processing of pre-miRNAs by DICER1. Was also reported to mediate dimethylation of pre-miR-145; however dimethylation cannot be reproduced by another group which observes a monomethylation of pre-miR-145. The chain is RNA 5'-monophosphate methyltransferase (BCDIN3D) from Bos taurus (Bovine).